Consider the following 157-residue polypeptide: Protein Smg homolog (157 aa).

It belongs to the Smg family.

This is Protein Smg homolog from Shewanella halifaxensis (strain HAW-EB4).